A 293-amino-acid chain; its full sequence is Methylsterol monooxygenase 1 (293 aa).

2 consecutive transmembrane segments (helical) span residues 55–75 (LIVH…FQFI) and 100–120 (GILF…YYFT). One can recognise a Fatty acid hydroxylase domain in the interval 144–274 (GCAVIEDTWH…FTWWDRIFGT (131 aa)). The Histidine box-1 signature appears at 157-161 (HRLLH). The Histidine box-2 motif lies at 170-174 (HKVHH). The helical transmembrane segment at 199–219 (FFIGIVLLCDHVILLWAWVTM) threads the bilayer. A Histidine box-3 motif is present at residues 249–255 (HHDFHHM).

This sequence belongs to the sterol desaturase family. Fe cation is required as a cofactor. In terms of processing, ubiquitinated by MARCHF6, leading to proteasomal degradation.

Its subcellular location is the endoplasmic reticulum membrane. It carries out the reaction 4,4-dimethyl-5alpha-cholest-7-en-3beta-ol + 6 Fe(II)-[cytochrome b5] + 3 O2 + 5 H(+) = 4alpha-carboxy-4beta-methyl-5alpha-cholest-7-ene-3beta-ol + 6 Fe(III)-[cytochrome b5] + 4 H2O. It catalyses the reaction 4,4-dimethyl-5alpha-cholesta-8,24-dien-3beta-ol + 6 Fe(II)-[cytochrome b5] + 3 O2 + 5 H(+) = 4beta-methylzymosterol-4alpha-carboxylate + 6 Fe(III)-[cytochrome b5] + 4 H2O. The enzyme catalyses 4alpha-methylzymosterol + 6 Fe(II)-[cytochrome b5] + 3 O2 + 5 H(+) = 4alpha-carboxyzymosterol + 6 Fe(III)-[cytochrome b5] + 4 H2O. The catalysed reaction is 4alpha-methyl-5alpha-cholest-7-en-3beta-ol + 6 Fe(II)-[cytochrome b5] + 3 O2 + 5 H(+) = 4alpha-carboxy-5alpha-cholest-7-en-3beta-ol + 6 Fe(III)-[cytochrome b5] + 4 H2O. It carries out the reaction 4,4-dimethyl-5alpha-cholest-8-en-3beta-ol + 6 Fe(II)-[cytochrome b5] + 3 O2 + 5 H(+) = 4alpha-carboxy-4beta-methyl-5alpha-cholest-8-en-3beta-ol + 6 Fe(III)-[cytochrome b5] + 4 H2O. It catalyses the reaction 4alpha-methyl-5alpha-cholest-8-en-3beta-ol + 6 Fe(II)-[cytochrome b5] + 3 O2 + 5 H(+) = 4alpha-carboxy-5alpha-cholest-8-ene-3beta-ol + 6 Fe(III)-[cytochrome b5] + 4 H2O. Its pathway is steroid biosynthesis; zymosterol biosynthesis; zymosterol from lanosterol: step 3/6. It functions in the pathway steroid biosynthesis; cholesterol biosynthesis. Functionally, catalyzes the three-step monooxygenation required for the demethylation of 4,4-dimethyl and 4alpha-methylsterols, which can be subsequently metabolized to cholesterol. This chain is Methylsterol monooxygenase 1 (Msmo1), found in Rattus norvegicus (Rat).